The primary structure comprises 256 residues: Geranylgeranylglyceryl phosphate synthase (256 aa).

The Mg(2+) site is built by aspartate 28 and serine 53. Residues 172-178 (YLEAGSG), 203-204 (GG), and 225-226 (GT) contribute to the sn-glycerol 1-phosphate site.

It belongs to the GGGP/HepGP synthase family. Group II subfamily. Mg(2+) serves as cofactor.

It localises to the cytoplasm. It catalyses the reaction sn-glycerol 1-phosphate + (2E,6E,10E)-geranylgeranyl diphosphate = sn-3-O-(geranylgeranyl)glycerol 1-phosphate + diphosphate. Its pathway is membrane lipid metabolism; glycerophospholipid metabolism. Prenyltransferase that catalyzes the transfer of the geranylgeranyl moiety of geranylgeranyl diphosphate (GGPP) to the C3 hydroxyl of sn-glycerol-1-phosphate (G1P). This reaction is the first ether-bond-formation step in the biosynthesis of archaeal membrane lipids. The protein is Geranylgeranylglyceryl phosphate synthase of Methanococcus maripaludis (strain C7 / ATCC BAA-1331).